The following is a 289-amino-acid chain: E3 ubiquitin-protein ligase MARCHF8 (289 aa).

Positions 1-68 (MNMPLHQISA…SAPVSSFPRT (68 aa)) are disordered. A compositionally biased stretch (basic and acidic residues) spans 25 to 39 (KTKEKEREEQNEKTL). The segment covering 50-64 (SKAGGSSVASAPVSS) has biased composition (low complexity). Residues 70–131 (VTPSNQDICR…ELCKYEFIME (62 aa)) form an RING-CH-type zinc finger. Zn(2+)-binding residues include Cys-78, Cys-81, Cys-95, Cys-97, His-105, Cys-108, Cys-121, and Cys-124. The next 2 membrane-spanning stretches (helical) occupy residues 155 to 175 (CSVTFHVIAITCVVWSLYVLI) and 195 to 215 (FWTKLVVVAIGFTGGLLFMYV).

In terms of assembly, interacts with CD86.

It localises to the golgi apparatus membrane. The protein localises to the endoplasmic reticulum membrane. It is found in the cytoplasmic vesicle membrane. The protein resides in the lysosome membrane. Its subcellular location is the early endosome membrane. It carries out the reaction S-ubiquitinyl-[E2 ubiquitin-conjugating enzyme]-L-cysteine + [acceptor protein]-L-lysine = [E2 ubiquitin-conjugating enzyme]-L-cysteine + N(6)-ubiquitinyl-[acceptor protein]-L-lysine.. Its pathway is protein modification; protein ubiquitination. Its function is as follows. E3 ubiquitin-protein ligase that plays several important roles in innate immunity and adaptive immunity. Mediates ubiquitination of CD86 and MHC class II proteins, such as HLA-DR alpha and beta, and promotes their subsequent endocytosis and sorting to lysosomes via multivesicular bodies. Possesses a very broad antiviral activity by specifically inactivating different viral fusion proteins. Targets and ubiquitinates cytoplasmic lysine residues of viral envelope glycoproteins with single transmembrane domains leading to their lysosomal degradation. Mediates the regulation of constitutive ubiquitination and trafficking of the viral restriction factor BST2 within the endocytic pathway. Plays a role in maintenance of immune tolerance to self by promoting the turnover and proteasomal degradation of PD-L1/CD274 via ubiquitination. Catalyzes the 'Lys-63'-linked polyubiquitylation of cGAS thereby inhibiting its DNA binding ability and impairing its antiviral innate immunity. Negatively regulates IL7-mediated T-cell homeostasis by mediating 'Lys-27'-linked polyubiquitination of IL7R, leading to its lysosomal degradation. The protein is E3 ubiquitin-protein ligase MARCHF8 (MARCHF8) of Bos taurus (Bovine).